The chain runs to 156 residues: CD-NTase/cGAS isopeptidase (156 aa).

An MPN domain is found at 9–147; sequence IDDFDNHVVI…WIGKKIKNDI (139 aa). Glu-38 (proton donor/acceptor) is an active-site residue. Zn(2+) contacts are provided by His-100, His-102, and Asp-113. Positions 100–113 match the JAMM motif motif; the sequence is HTHPEDFPHPSFID.

The protein belongs to the peptidase M67B family. Cap3 isopeptidase subfamily.

Metalloprotease priming reversal component of a CBASS antivirus system. CBASS (cyclic oligonucleotide-based antiphage signaling system) provides immunity against bacteriophages. The CD-NTase protein (DncV) synthesizes cyclic nucleotides in response to infection; these serve as specific second messenger signals. The signals activate a diverse range of effectors, leading to bacterial cell death and thus abortive phage infection. A type II-A(GA) CBASS system. In terms of biological role, reverses the primed state of DncV, the CD-NTase, cleaving it from cellular proteins. Cleaves a Sumo-DncV-DncV fusion protein precisely between the 2 DncV moieties. Its function is as follows. Protects E.coli against phage infection. When capV and dncV are introduced in E.coli MG1655 there is 1000-fold protection against phage P1; protection against other phage (T4, T5 and T6) requires the 2 subsequent genes. In another paper the capV-dncV-cap2-cap3 operon gives 10(4)-10(5)-fold protection against phages lambda, T2, T4 and T6, about 1000-fold protection against P1 and 10-fold protection against T5. The chain is CD-NTase/cGAS isopeptidase from Escherichia coli (strain TW11681).